We begin with the raw amino-acid sequence, 512 residues long: Maturase K (512 aa).

The protein belongs to the intron maturase 2 family. MatK subfamily.

It is found in the plastid. It localises to the chloroplast. Functionally, usually encoded in the trnK tRNA gene intron. Probably assists in splicing its own and other chloroplast group II introns. In Lemna minor (Common duckweed), this protein is Maturase K.